Consider the following 427-residue polypeptide: Histidinol dehydrogenase (427 aa).

NAD(+)-binding residues include Y127, Q187, and N210. Substrate contacts are provided by S233, Q255, and H258. Q255 and H258 together coordinate Zn(2+). Residues E323 and H324 each act as proton acceptor in the active site. Substrate contacts are provided by H324, D357, E411, and H416. Residue D357 coordinates Zn(2+). H416 lines the Zn(2+) pocket.

The protein belongs to the histidinol dehydrogenase family. Zn(2+) serves as cofactor.

It catalyses the reaction L-histidinol + 2 NAD(+) + H2O = L-histidine + 2 NADH + 3 H(+). Its pathway is amino-acid biosynthesis; L-histidine biosynthesis; L-histidine from 5-phospho-alpha-D-ribose 1-diphosphate: step 9/9. In terms of biological role, catalyzes the sequential NAD-dependent oxidations of L-histidinol to L-histidinaldehyde and then to L-histidine. This Streptococcus mutans serotype c (strain ATCC 700610 / UA159) protein is Histidinol dehydrogenase.